Consider the following 551-residue polypeptide: Membrane protein insertase YidC (551 aa).

Residues 3–23 (ANHIRILLLVTIAIMFISLMG) form a helical membrane-spanning segment. Over residues 33 to 47 (NTKQQTSATQNNSHY) the composition is skewed to polar residues. The segment at 33–59 (NTKQQTSATQNNSHYDNADSSTNTDVT) is disordered. Over residues 50 to 59 (ADSSTNTDVT) the composition is skewed to low complexity. 3 helical membrane-spanning segments follow: residues 361–381 (LVGN…LIFY), 431–451 (LSGC…YWVL), and 504–524 (VMMF…SGLV).

Belongs to the OXA1/ALB3/YidC family. Type 1 subfamily. In terms of assembly, interacts with the Sec translocase complex via SecD. Specifically interacts with transmembrane segments of nascent integral membrane proteins during membrane integration.

The protein resides in the cell inner membrane. Its function is as follows. Required for the insertion and/or proper folding and/or complex formation of integral membrane proteins into the membrane. Involved in integration of membrane proteins that insert both dependently and independently of the Sec translocase complex, as well as at least some lipoproteins. Aids folding of multispanning membrane proteins. This Francisella tularensis subsp. tularensis (strain SCHU S4 / Schu 4) protein is Membrane protein insertase YidC.